The primary structure comprises 466 residues: 23S rRNA (uracil(1939)-C(5))-methyltransferase RlmD (466 aa).

The TRAM domain maps to 1–54 (MVDVLNIESLDLEARGIAHRDGKVLFVEGALPGERVTVQTVRRKPSYEIAKVEE). Cys67, Cys73, Cys76, and Cys155 together coordinate [4Fe-4S] cluster. Gln264, Phe293, Asn298, Glu314, Asn342, and Asp363 together coordinate S-adenosyl-L-methionine. The active-site Nucleophile is the Cys393.

The protein belongs to the class I-like SAM-binding methyltransferase superfamily. RNA M5U methyltransferase family. RlmD subfamily.

It carries out the reaction uridine(1939) in 23S rRNA + S-adenosyl-L-methionine = 5-methyluridine(1939) in 23S rRNA + S-adenosyl-L-homocysteine + H(+). In terms of biological role, catalyzes the formation of 5-methyl-uridine at position 1939 (m5U1939) in 23S rRNA. The sequence is that of 23S rRNA (uracil(1939)-C(5))-methyltransferase RlmD from Bordetella bronchiseptica (strain ATCC BAA-588 / NCTC 13252 / RB50) (Alcaligenes bronchisepticus).